A 37-amino-acid polypeptide reads, in one-letter code: Large ribosomal subunit protein bL36 (37 aa).

Belongs to the bacterial ribosomal protein bL36 family.

The chain is Large ribosomal subunit protein bL36 from Cutibacterium acnes (strain DSM 16379 / KPA171202) (Propionibacterium acnes).